The sequence spans 193 residues: MRLCDTDIERHLDEGKIVIEPRPGIERISGVSVDVLLGNEFRVFRDHTAPYIDLSGPSSEMADAIDRVMSDEIHVPDGEAFYLHPGQLALAVTYESVTLPADIVGWLDGRSSLARLGLMVHVTAHRIDPGWSGRIVLEFYNGGKLPLALRPKMKIGALNFEMLSGVAARPYNKRENAKYKSQQGAVASRINQD.

DCTP-binding positions include 110–115 (RSSLAR), aspartate 128, 136–138 (VLE), tyrosine 171, lysine 178, and glutamine 182. Residue glutamate 138 is the Proton donor/acceptor of the active site.

It belongs to the dCTP deaminase family. As to quaternary structure, homotrimer.

It catalyses the reaction dCTP + H2O + H(+) = dUTP + NH4(+). It participates in pyrimidine metabolism; dUMP biosynthesis; dUMP from dCTP (dUTP route): step 1/2. Functionally, catalyzes the deamination of dCTP to dUTP. This is dCTP deaminase from Aeromonas hydrophila subsp. hydrophila (strain ATCC 7966 / DSM 30187 / BCRC 13018 / CCUG 14551 / JCM 1027 / KCTC 2358 / NCIMB 9240 / NCTC 8049).